Consider the following 365-residue polypeptide: tRNA N6-adenosine threonylcarbamoyltransferase (365 aa).

Fe cation-binding residues include His119 and His123. Residues 141–145 (LVSGG), Asp174, Gly187, and Asn288 each bind substrate. Residue Asp316 participates in Fe cation binding.

This sequence belongs to the KAE1 / TsaD family. It depends on Fe(2+) as a cofactor.

Its subcellular location is the cytoplasm. It catalyses the reaction L-threonylcarbamoyladenylate + adenosine(37) in tRNA = N(6)-L-threonylcarbamoyladenosine(37) in tRNA + AMP + H(+). In terms of biological role, required for the formation of a threonylcarbamoyl group on adenosine at position 37 (t(6)A37) in tRNAs that read codons beginning with adenine. Is involved in the transfer of the threonylcarbamoyl moiety of threonylcarbamoyl-AMP (TC-AMP) to the N6 group of A37, together with TsaE and TsaB. TsaD likely plays a direct catalytic role in this reaction. This chain is tRNA N6-adenosine threonylcarbamoyltransferase, found in Agrobacterium fabrum (strain C58 / ATCC 33970) (Agrobacterium tumefaciens (strain C58)).